A 765-amino-acid chain; its full sequence is Complement factor B (765 aa).

Positions 1–25 are cleaved as a signal peptide; it reads MGSNRCPRLGLVPLILGLLSGGVSM. 3 Sushi domains span residues 35–100, 101–160, and 163–220; these read SPCS…ECKA, IRCP…ICDD, and GYCP…SCQD. Cystine bridges form between Cys37–Cys76, Cys62–Cys98, Cys103–Cys145, Cys131–Cys158, Cys165–Cys205, and Cys191–Cys218. Residues Asn122 and Asn142 are each glycosylated (N-linked (GlcNAc...) asparagine). The VWFA domain occupies 270-469; the sequence is NIYLVLDGSD…NLEDVFFQML (200 aa). Mg(2+) contacts are provided by Ser278 and Ser280. N-linked (GlcNAc...) asparagine glycosylation occurs at Asn285. Thr353 contributes to the Mg(2+) binding site. A glycan (N-linked (GlcNAc...) asparagine) is linked at Asn378. Positions 477–758 constitute a Peptidase S1 domain; it reads LCGMVWEHKD…VLPWLKEKLK (282 aa). Cystine bridges form between Cys478–Cys596, Cys511–Cys527, Cys599–Cys615, Cys660–Cys686, and Cys699–Cys729. Catalysis depends on charge relay system residues His526 and Asp576. Residue Ser703 is the Charge relay system of the active site.

Belongs to the peptidase S1 family. Monomer. Interacts with complement C3b; this interaction is dependent on the presence of Mg(2+). As to quaternary structure, catalytic component of the C3 convertase of the alternative complement pathway, also named C3bBb, composed of complement factor B Bb and complement C3b. Catalytic component of the C5 convertase of the alternative complement pathway, also named C3bBb3b, composed of complement factor B Bb and additional molecules of complement C3b. Interacts to CFP; this interaction contributes to the stabilization of the active C3-convertase enzyme complex. It depends on Mg(2+) as a cofactor. Requires Mn(2+) as cofactor. Cleaved by CFD following activation of the alternative complement system, generating Ba and Bb chains. Cleavage and activation takes place when CFB is already associated with complement C3b.

The protein localises to the secreted. The protein resides in the cell surface. The enzyme catalyses Cleavage of Arg-|-Ser bond in complement component C3 alpha-chain to yield C3a and C3b, and Arg-|-Xaa bond in complement component C5 alpha-chain to yield C5a and C5b.. Its function is as follows. Precursor of the catalytic component of the C3 and C5 convertase complexes of the alternative pathway of the complement system, a cascade of proteins that leads to phagocytosis and breakdown of pathogens and signaling that strengthens the adaptive immune system. The alternative complement pathway acts as an amplification loop that enhances other complement pathways (classical, lectin and GZMK) by promoting formation of additional C3 and C5 convertases. CFB is cleaved and activated by CFD to generate Ba and Bb chains; Bb chain constituting the catalytic component of the C3 and C5 convertases. Serine protease component of the complement C3 and C5 convertase complexes of the alternative complement pathway. Following cleavage and activation by factor D (CFD), forms the C3 convertase together with complement C3b. As part of the C3 convertase, cleaves and activates C3 into C3a anaphylatoxin and C3b opsonin, the next components of the complement pathways. When an additional complement C3b molecule binds to the C3 convertase, forms the C5 convertase, which cleaves and activates C5 into C5a anaphylatoxin and C5b component of the membrane attack complex. In terms of biological role, involved in proliferation and differentiation of preactivated B-lymphocytes, rapid spreading of peripheral blood monocytes, stimulation of lymphocyte blastogenesis and lysis of erythrocytes. This chain is Complement factor B (CFB), found in Sus scrofa (Pig).